We begin with the raw amino-acid sequence, 357 residues long: tRNA pseudouridine synthase B (357 aa).

The Nucleophile role is filled by Asp42.

This sequence belongs to the pseudouridine synthase TruB family. Type 1 subfamily.

It carries out the reaction uridine(55) in tRNA = pseudouridine(55) in tRNA. In terms of biological role, responsible for synthesis of pseudouridine from uracil-55 in the psi GC loop of transfer RNAs. This Treponema denticola (strain ATCC 35405 / DSM 14222 / CIP 103919 / JCM 8153 / KCTC 15104) protein is tRNA pseudouridine synthase B.